The following is a 604-amino-acid chain: Prostaglandin G/H synthase 2 (604 aa).

Residues 1–17 form the signal peptide; the sequence is MLARALLLCAALALGQA. Residues 18–55 form the EGF-like domain; the sequence is ANPCCSNPCQNRGECLSVGFDRYKCDCTRTGYYGENCT. 4 cysteine pairs are disulfide-bonded: Cys-21/Cys-32, Cys-22/Cys-145, Cys-26/Cys-42, and Cys-44/Cys-54. N-linked (GlcNAc...) asparagine glycosylation is present at Asn-53. A substrate-binding site is contributed by Arg-106. Asn-130 carries N-linked (GlcNAc...) asparagine glycosylation. The active-site Proton acceptor is His-193. Residue Tyr-341 coordinates substrate. Residue Tyr-371 is the For cyclooxygenase activity of the active site. A heme b-binding site is contributed by His-374. A glycan (N-linked (GlcNAc...) asparagine) is linked at Asn-396. Position 526 is an S-nitrosocysteine (Cys-526). A disulfide bond links Cys-555 and Cys-561. A glycan (N-linked (GlcNAc...) asparagine) is linked at Asn-580.

This sequence belongs to the prostaglandin G/H synthase family. As to quaternary structure, homodimer. It depends on heme b as a cofactor. In terms of processing, S-nitrosylation by NOS2 (iNOS) activates enzyme activity. S-nitrosylation may take place on different Cys residues in addition to Cys-526.

Its subcellular location is the microsome membrane. It is found in the endoplasmic reticulum membrane. The protein resides in the nucleus inner membrane. The protein localises to the nucleus outer membrane. It carries out the reaction (5Z,8Z,11Z,14Z)-eicosatetraenoate + AH2 + 2 O2 = prostaglandin H2 + A + H2O. The catalysed reaction is (5Z,8Z,11Z,14Z)-eicosatetraenoate + 2 O2 = prostaglandin G2. The enzyme catalyses prostaglandin G2 + AH2 = prostaglandin H2 + A + H2O. It catalyses the reaction (5Z,8Z,11Z,14Z,17Z)-eicosapentaenoate + 2 O2 = prostaglandin G3. It carries out the reaction prostaglandin G3 + AH2 = prostaglandin H3 + A + H2O. The catalysed reaction is (8Z,11Z,14Z)-eicosatrienoate + 2 O2 = prostaglandin G1. The enzyme catalyses prostaglandin G1 + AH2 = prostaglandin H1 + A + H2O. It catalyses the reaction 2-(5Z,8Z,11Z,14Z)-eicosatetraenoyl-sn-glycero-3-phosphoethanolamine + 2 O2 = 2-(prostaglandin G2)-sn-glycero-3-phosphoethanolamine. It carries out the reaction 2-(prostaglandin G2)-sn-glycero-3-phosphoethanolamine + AH2 = 2-(prostaglandin H2)-sn-glycero-3-phosphoethanolamine + A + H2O. The catalysed reaction is 2-(5Z,8Z,11Z,14Z)-eicosatetraenoyl-sn-glycero-3-phosphocholine + 2 O2 = 2-(prostaglandin G2)-sn-glycero-3-phosphocholine. The enzyme catalyses 2-(prostaglandin G2)-sn-glycero-3-phosphocholine + AH2 = 2-(prostaglandin H2)-sn-glycero-3-phosphocholine + A + H2O. It catalyses the reaction (15S)-hydroperoxy-(5Z,8Z,11Z,13E)-eicosatetraenoate + AH2 = (15S)-hydroxy-(5Z,8Z,11Z,13E)-eicosatetraenoate + A + H2O. It carries out the reaction 2-(5Z,8Z,11Z,14Z)-eicosatetraenoyl-sn-glycero-3-phosphocholine + AH2 + O2 = 2-[(15S)-hydroxy-(5Z,8Z,11Z,13E)-eicosatetraenoyl]-sn-glycero-3-phosphocholine + A + H2O. The catalysed reaction is 2-(5Z,8Z,11Z,14Z)-eicosatetraenoyl-sn-glycero-3-phosphocholine + AH2 + O2 = 2-[(15R)-hydroxy-(5Z,8Z,11Z,13E)-eicosatetraenoyl]-sn-glycero-3-phosphocholine + A + H2O. The enzyme catalyses 2-(5Z,8Z,11Z,14Z)-eicosatetraenoyl-sn-glycero-3-phosphocholine + AH2 + O2 = 2-[(11R)-hydroxy-(5Z,8Z,12E,14Z)-eicosatetraenoyl]-sn-glycero-3-phosphocholine + A + H2O. It catalyses the reaction (9Z,12Z)-octadecadienoate + AH2 + O2 = 9-hydroxy-(10E,12Z)-octadecadienoate + A + H2O. It carries out the reaction (9Z,12Z)-octadecadienoate + AH2 + O2 = 13-hydroxy-(9Z,11E)-octadecadienoate + A + H2O. The catalysed reaction is (5Z,8Z,11Z,14Z)-eicosatetraenoate + AH2 + O2 = (15R)-hydroxy-(5Z,8Z,11Z,13E)-eicosatetraenoate + A + H2O. The enzyme catalyses (5Z,8Z,11Z,14Z)-eicosatetraenoate + AH2 + O2 = (11R)-hydroxy-(5Z,8Z,12E,14Z)-eicosatetraenoate + A + H2O. It catalyses the reaction (5Z,8Z,11Z,14Z,17Z)-eicosapentaenoate + AH2 + O2 = (11R)-hydroxy-(5Z,8Z,12E,14Z,17Z)-eicosapentaenoate + A + H2O. It carries out the reaction (5Z,8Z,11Z,14Z,17Z)-eicosapentaenoate + AH2 + O2 = (18S)-hydroxy-(5Z,8Z,11Z,14Z,16E)-eicosapentaenoate + A + H2O. The catalysed reaction is (5Z,8Z,11Z,14Z,17Z)-eicosapentaenoate + AH2 + O2 = (18R)-hydroxy-(5Z,8Z,11Z,14Z,16E)-eicosapentaenoate + A + H2O. The enzyme catalyses (5Z,8Z,11Z,14Z,17Z)-eicosapentaenoate + AH2 + O2 = (15R)-hydroxy-(5Z,8Z,11Z,13E,17Z)-eicosapentaenoate + A + H2O. It catalyses the reaction (5Z,8Z,11Z,14Z,17Z)-eicosapentaenoate + AH2 + O2 = (15S)-hydroxy-(5Z,8Z,11Z,13E,17Z)-eicosapentaenoate + A + H2O. It carries out the reaction (7Z,10Z,13Z,16Z,19Z)-docosapentaenoate + AH2 + O2 = 13R-hydroxy-(7Z,10Z,14E,16Z,19Z)-docosapentaenoate + A + H2O. The catalysed reaction is (4Z,7Z,10Z,13Z,16Z,19Z)-docosahexaenoate + AH2 + O2 = 13-hydroxy-(4Z,7Z,10Z,14E,16Z,19Z)-docosahexaenoate + A + H2O. The enzyme catalyses (5S)-hydroxy-(6E,8Z,11Z,14Z)-eicosatetraenoate + AH2 + O2 = (5S,15R)-dihydroxy-(6E,8Z,11Z,13E)-eicosatetraenoate + A + H2O. It catalyses the reaction (4Z,7Z,10Z,13Z,16Z,19Z)-docosahexaenoate + AH2 + O2 = 17R-hydroxy-(4Z,7Z,10Z,13Z,15E,19Z)-docosahexaenoate + A + H2O. It carries out the reaction (5S)-hydroxy-(6E,8Z,11Z,14Z)-eicosatetraenoate + AH2 + O2 = (5S,15S)-dihydroxy-(6E,8Z,11Z,13E)-eicosatetraenoate + A + H2O. The catalysed reaction is (5S)-hydroxy-(6E,8Z,11Z,14Z)-eicosatetraenoate + AH2 + O2 = (5S,11R)-dihydroxy-(6E,8Z,12E,14Z)-eicosatetraenoate + A + H2O. The enzyme catalyses 2-(5Z,8Z,11Z,14Z-eicosatetraenoyl)-glycerol + 2 O2 = 2-glyceryl-prostaglandin G2. It catalyses the reaction 2-glyceryl-prostaglandin G2 + AH2 = 2-glyceryl-prostaglandin H2 + A + H2O. It carries out the reaction (5Z,8Z,11Z,14Z)-eicosatetraenoate + O2 = (15R)-hydroperoxy-(5Z,8Z,11Z,13E)-eicosatetraenoate. The catalysed reaction is (5Z,8Z,11Z,14Z)-eicosatetraenoate + O2 = 11R-hydroperoxy-(5Z,8Z,12E,14Z)-eicosatetraenoate. The enzyme catalyses (9Z,12Z)-octadecadienoate + AH2 + O2 = (9R)-hydroxy-(10E,12Z)-octadecadienoate + A + H2O. It catalyses the reaction (9Z,12Z)-octadecadienoate + AH2 + O2 = (9S)-hydroxy-(10E,12Z)-octadecadienoate + A + H2O. It carries out the reaction (9Z,12Z)-octadecadienoate + AH2 + O2 = (13S)-hydroxy-(9Z,11E)-octadecadienoate + A + H2O. The catalysed reaction is (9Z,12Z)-octadecadienoate + AH2 + O2 = (13R)-hydroxy-(9Z,11E)-octadecadienoate + A + H2O. The protein operates within lipid metabolism; prostaglandin biosynthesis. Dual cyclooxygenase and peroxidase in the biosynthesis pathway of prostanoids, a class of C20 oxylipins mainly derived from arachidonate ((5Z,8Z,11Z,14Z)-eicosatetraenoate, AA, C20:4(n-6)), with a particular role in the inflammatory response. The cyclooxygenase activity oxygenates AA to the hydroperoxy endoperoxide prostaglandin G2 (PGG2), and the peroxidase activity reduces PGG2 to the hydroxy endoperoxide prostaglandin H2 (PGH2), the precursor of all 2-series prostaglandins and thromboxanes. This complex transformation is initiated by abstraction of hydrogen at carbon 13 (with S-stereochemistry), followed by insertion of molecular O2 to form the endoperoxide bridge between carbon 9 and 11 that defines prostaglandins. The insertion of a second molecule of O2 (bis-oxygenase activity) yields a hydroperoxy group in PGG2 that is then reduced to PGH2 by two electrons. Similarly catalyzes successive cyclooxygenation and peroxidation of dihomo-gamma-linoleate (DGLA, C20:3(n-6)) and eicosapentaenoate (EPA, C20:5(n-3)) to corresponding PGH1 and PGH3, the precursors of 1- and 3-series prostaglandins. In an alternative pathway of prostanoid biosynthesis, converts 2-arachidonoyl lysophopholipids to prostanoid lysophopholipids, which are then hydrolyzed by intracellular phospholipases to release free prostanoids. Metabolizes 2-arachidonoyl glycerol yielding the glyceryl ester of PGH2, a process that can contribute to pain response. Generates lipid mediators from n-3 and n-6 polyunsaturated fatty acids (PUFAs) via a lipoxygenase-type mechanism. Oxygenates PUFAs to hydroperoxy compounds and then reduces them to corresponding alcohols. Plays a role in the generation of resolution phase interaction products (resolvins) during both sterile and infectious inflammation. Metabolizes docosahexaenoate (DHA, C22:6(n-3)) to 17R-HDHA, a precursor of the D-series resolvins (RvDs). As a component of the biosynthetic pathway of E-series resolvins (RvEs), converts eicosapentaenoate (EPA, C20:5(n-3)) primarily to 18S-HEPE that is further metabolized by ALOX5 and LTA4H to generate 18S-RvE1 and 18S-RvE2. In vascular endothelial cells, converts docosapentaenoate (DPA, C22:5(n-3)) to 13R-HDPA, a precursor for 13-series resolvins (RvTs) shown to activate macrophage phagocytosis during bacterial infection. In activated leukocytes, contributes to oxygenation of hydroxyeicosatetraenoates (HETE) to diHETES (5,15-diHETE and 5,11-diHETE). Can also use linoleate (LA, (9Z,12Z)-octadecadienoate, C18:2(n-6)) as substrate and produce hydroxyoctadecadienoates (HODEs) in a regio- and stereospecific manner, being (9R)-HODE ((9R)-hydroxy-(10E,12Z)-octadecadienoate) and (13S)-HODE ((13S)-hydroxy-(9Z,11E)-octadecadienoate) its major products. During neuroinflammation, plays a role in neuronal secretion of specialized preresolving mediators (SPMs) 15R-lipoxin A4 that regulates phagocytic microglia. This chain is Prostaglandin G/H synthase 2 (PTGS2), found in Cavia porcellus (Guinea pig).